We begin with the raw amino-acid sequence, 235 residues long: Cell division protein FtsQ (235 aa).

Residues 1 to 6 (MERLTR) lie on the Cytoplasmic side of the membrane. The chain crosses the membrane as a helical span at residues 7–25 (WLLVMMAMLLAASGLVWFY). Residues 26 to 235 (NSNHLPVKQV…DGLPEKESEE (210 aa)) are Periplasmic-facing. Residues 30–99 (LPVKQVSLKG…DTVEVVLTER (70 aa)) enclose the POTRA domain.

It belongs to the FtsQ/DivIB family. FtsQ subfamily. Part of a complex composed of FtsB, FtsL and FtsQ.

Its subcellular location is the cell inner membrane. Its function is as follows. Essential cell division protein. May link together the upstream cell division proteins, which are predominantly cytoplasmic, with the downstream cell division proteins, which are predominantly periplasmic. May control correct divisome assembly. The protein is Cell division protein FtsQ of Neisseria meningitidis serogroup B (strain ATCC BAA-335 / MC58).